Here is a 603-residue protein sequence, read N- to C-terminus: Phosphogluconate dehydratase (603 aa).

The [4Fe-4S] cluster site is built by cysteine 154 and cysteine 221.

Belongs to the IlvD/Edd family. [4Fe-4S] cluster serves as cofactor.

It carries out the reaction 6-phospho-D-gluconate = 2-dehydro-3-deoxy-6-phospho-D-gluconate + H2O. It participates in carbohydrate metabolism; Entner-Doudoroff pathway. Catalyzes the dehydration of 6-phospho-D-gluconate to 2-dehydro-3-deoxy-6-phospho-D-gluconate. The sequence is that of Phosphogluconate dehydratase from Escherichia coli O157:H7.